We begin with the raw amino-acid sequence, 363 residues long: Methyltransferase pynC (363 aa).

Residues 199–200 (GG), Asp-225, 254–255 (SF), Arg-270, and Arg-271 contribute to the S-adenosyl-L-methionine site.

This sequence belongs to the class I-like SAM-binding methyltransferase superfamily. Cation-independent O-methyltransferase family.

Its pathway is secondary metabolite biosynthesis. Functionally, methyltransferase; part of the gene cluster that mediates the biosynthesis of pyranonigrins, a family of antioxidative compounds. The first step of pyranonigrins biosynthesis is performed by the hybrid PKS-NRPS synthetase that condenses 6 malonyl-CoA units to an acetyl starter unit, to form a 1,3,5-trioxotetradecane-6,8-dienyl-ACP. The enoyl reductase (ER) domain of pynA is likely to be functional during the first two rounds of polyketide chain extension, to generate the saturated C-C bonds of the alkyl side chain. PynA subsequently forms the amide bond between the acyl chain and L-serine. Although pynA has a terminal reductase domain, it appears to require the thioesterase pynI for the release of the straight-chain intermediate from pynA via the formation of a tetramic acid pyranonigrin J. The methyltransferase pynC then coverts pyranonigrin J to pyranonigrin I via N-methylation. The FAD-dependent monooxygenase pynG catalyzes an epoxidation-mediated cyclization to form the dihydro-gamma-pyrone moiety, followed by pynD-catalyzed oxidation of the alcohol to the ketone and enolization to yield the characteristic tetramic acid-fused gamma-pyrone core of pyranonigrin H. Pyranonigrin H is substrate of pynH for dehydration-mediated exo-methylene formation from the serine side chain to produce pyranonigrin E, before the oxidase pynE reduces the exo-methylene of pyranonigrin E into a pendant methyl to form pyranonigrin G. The FAD-linked oxidoreductase pynB performs the reverse reaction and converts pyranonigrin G back to pyranonigrin E. In Aspergillus niger (strain ATCC MYA-4892 / CBS 513.88 / FGSC A1513), this protein is Methyltransferase pynC.